We begin with the raw amino-acid sequence, 255 residues long: Tumor necrosis factor receptor superfamily member 9 (255 aa).

Residues 1–23 (MGNSCYNIVATLLLVLNFERTRS) form the signal peptide. TNFR-Cys repeat units lie at residues 24-45 (LQDPCSNCPAGTFCDNNRNQIC), 47-86 (PCPPNSFSSAGGQRTCDICRQCKGVFRTRKECSSTSNAEC), 87-118 (DCTPGFHCLGAGCSMCEQDCKQGQELTKKGCK), and 119-159 (DCCF…VVCG). Over 24 to 186 (LQDPCSNCPA…PAREPGHSPQ (163 aa)) the chain is Extracellular. Intrachain disulfides connect Cys28–Cys37, Cys31–Cys45, Cys48–Cys62, Cys65–Cys78, Cys68–Cys86, Cys88–Cys94, Cys99–Cys106, Cys102–Cys117, and Cys121–Cys133. Asn138 and Asn149 each carry an N-linked (GlcNAc...) asparagine glycan. The cysteines at positions 139 and 158 are disulfide-linked. The interval 161-180 (SPADLSPGASSVTPPAPARE) is disordered. The chain crosses the membrane as a helical span at residues 187 to 213 (IISFFLALTSTALLFLLFFLTLRFSVV). Topologically, residues 214–255 (KRGRKKLLYIFKQPFMRPVQTTQEEDGCSCRFPEEEEGGCEL) are cytoplasmic. The segment at 214–255 (KRGRKKLLYIFKQPFMRPVQTTQEEDGCSCRFPEEEEGGCEL) is interaction with LRR-1.

Predominantly homodimeric, but may also exist as a monomer. Interacts with TRAF1, TRAF2 and TRAF3. Interacts with LRR-repeat protein 1/LRR-1. As to expression, expressed on the surface of activated T-cells.

The protein localises to the cell membrane. In terms of biological role, receptor for TNFSF9/4-1BBL. Conveys a signal that enhances CD8(+) T-cell survival, cytotoxicity, and mitochondrial activity, thereby promoting immunity against viruses and tumors. The chain is Tumor necrosis factor receptor superfamily member 9 (TNFRSF9) from Homo sapiens (Human).